The sequence spans 549 residues: Glucose-6-phosphate isomerase (549 aa).

Catalysis depends on E355, which acts as the Proton donor. Residues H387 and K515 contribute to the active site.

This sequence belongs to the GPI family.

It is found in the cytoplasm. It carries out the reaction alpha-D-glucose 6-phosphate = beta-D-fructose 6-phosphate. It participates in carbohydrate biosynthesis; gluconeogenesis. The protein operates within carbohydrate degradation; glycolysis; D-glyceraldehyde 3-phosphate and glycerone phosphate from D-glucose: step 2/4. Catalyzes the reversible isomerization of glucose-6-phosphate to fructose-6-phosphate. In Mannheimia succiniciproducens (strain KCTC 0769BP / MBEL55E), this protein is Glucose-6-phosphate isomerase.